Consider the following 193-residue polypeptide: Zinc finger CCHC domain-containing protein 17 (193 aa).

One can recognise an S1 motif; truncated domain in the interval 1–40 (MSSCRVDKPSEIVDVGDKVWVKLIGREMKNDRIKVSLSMK). S66 bears the Phosphoserine mark. A CCHC-type zinc finger spans residues 83–100 (TTCKKCGCKGHFAKDCFM). K96 is subject to N6-acetyllysine. Residues 113–193 (EEEEKEEAKS…KKKHKKKHKE (81 aa)) are disordered. Residues 118–129 (EEAKSAEFEKPV) show a composition bias toward basic and acidic residues. Positions 134–150 (PSRKRKKEKKKKKHRDR) are enriched in basic residues. Position 135 is a phosphoserine (S135). Basic and acidic residues predominate over residues 163-177 (DTGKRARHTSKDSKA). The segment covering 178–193 (AKKKKKKKKHKKKHKE) has biased composition (basic residues).

In terms of assembly, may interact with PNN. May associate with the 60 S ribosomal subunit.

The protein resides in the nucleus. Its subcellular location is the nucleolus. The sequence is that of Zinc finger CCHC domain-containing protein 17 (ZCCHC17) from Macaca fascicularis (Crab-eating macaque).